Reading from the N-terminus, the 432-residue chain is Adenosylhomocysteinase (432 aa).

Ser-2 is subject to N-acetylserine. Thr-57, Asp-131, and Glu-156 together coordinate substrate. The residue at position 183 (Ser-183) is a Phosphoserine. Residues 183 to 350 (SVTKSKFDNL…EGRLVNLGCA (168 aa)) form an NAD binding region. Lys-186 and Asp-190 together coordinate substrate. Lys-186 is modified (N6-(2-hydroxyisobutyryl)lysine). Tyr-193 carries the post-translational modification Phosphotyrosine.

This sequence belongs to the adenosylhomocysteinase family. As to quaternary structure, homotetramer. Interaction with AHCYL1. NAD(+) is required as a cofactor.

It is found in the cytoplasm. Its subcellular location is the melanosome. The protein resides in the nucleus. It localises to the endoplasmic reticulum. The enzyme catalyses S-adenosyl-L-homocysteine + H2O = L-homocysteine + adenosine. It participates in amino-acid biosynthesis; L-homocysteine biosynthesis; L-homocysteine from S-adenosyl-L-homocysteine: step 1/1. Its function is as follows. Catalyzes the hydrolysis of S-adenosyl-L-homocysteine to form adenosine and homocysteine. Binds copper ions. The polypeptide is Adenosylhomocysteinase (AHCY) (Sus scrofa (Pig)).